Reading from the N-terminus, the 416-residue chain is Serine/threonine-protein kinase 26 (416 aa).

At alanine 2 the chain carries N-acetylalanine. Serine 4 is modified (phosphoserine). In terms of domain architecture, Protein kinase spans 24–274 (FTKLERIGKG…AKELLKHKFI (251 aa)). Residues 30 to 38 (IGKGSFGEV) and lysine 53 contribute to the ATP site. The Proton acceptor role is filled by aspartate 144. Residue threonine 178 is modified to Phosphothreonine; by autocatalysis. Residues 296-343 (AEGHSDEESDSEGSDSESSSRESNPHPEWSFTTVRKKPDPKKLQNGEE) form a disordered region. A phosphoserine mark is found at serine 300, serine 304, serine 306, serine 309, and serine 325. 2 positions are modified to phosphothreonine: threonine 327 and threonine 328. Residues 331 to 340 (KKPDPKKLQN) show a composition bias toward basic and acidic residues.

This sequence belongs to the protein kinase superfamily. STE Ser/Thr protein kinase family. STE20 subfamily. Homodimer. Interacts with PDCD10. Interacts with GOLGA2. Interacts with CTTNBP2NL. Interacts with RIPOR1 (via C-terminus); this interaction occurs in a PDCD10-dependent and Rho-independent manner. Interacts with PDCD10; this interaction is required for the association of STK26 with RIPOR1. Part of the core of STRIPAK complexes composed of PP2A catalytic and scaffolding subunits, the striatins (PP2A regulatory subunits), the striatin-associated proteins MOB4, STRIP1 and STRIP2, PDCD10 and members of the STE20 kinases, such as STK24 and STK26. Mg(2+) is required as a cofactor.

The protein resides in the cytoplasm. It is found in the golgi apparatus. It carries out the reaction L-seryl-[protein] + ATP = O-phospho-L-seryl-[protein] + ADP + H(+). It catalyses the reaction L-threonyl-[protein] + ATP = O-phospho-L-threonyl-[protein] + ADP + H(+). With respect to regulation, interaction with Golgi matrix protein GOLGA2 leads to autophosphorylation on Thr-178, possibly as a consequence of stabilization of dimer formation. May also be activated by C-terminal cleavage. Its function is as follows. Serine/threonine-protein kinase that acts as a mediator of cell growth. Modulates apoptosis. In association with STK24 negatively regulates Golgi reorientation in polarized cell migration upon RHO activation. Phosphorylates ATG4B at 'Ser-383', thereby increasing autophagic flux. Part of the striatin-interacting phosphatase and kinase (STRIPAK) complexes. STRIPAK complexes have critical roles in protein (de)phosphorylation and are regulators of multiple signaling pathways including Hippo, MAPK, nuclear receptor and cytoskeleton remodeling. Different types of STRIPAK complexes are involved in a variety of biological processes such as cell growth, differentiation, apoptosis, metabolism and immune regulation. The sequence is that of Serine/threonine-protein kinase 26 from Mus musculus (Mouse).